The primary structure comprises 322 residues: Aspartate carbamoyltransferase catalytic subunit (322 aa).

Positions 70 and 71 each coordinate carbamoyl phosphate. An L-aspartate-binding site is contributed by Lys98. 3 residues coordinate carbamoyl phosphate: Arg120, His150, and Gln153. 2 residues coordinate L-aspartate: Arg184 and Arg239. 2 residues coordinate carbamoyl phosphate: Gly280 and Pro281.

The protein belongs to the aspartate/ornithine carbamoyltransferase superfamily. ATCase family. Heterododecamer (2C3:3R2) of six catalytic PyrB chains organized as two trimers (C3), and six regulatory PyrI chains organized as three dimers (R2).

The enzyme catalyses carbamoyl phosphate + L-aspartate = N-carbamoyl-L-aspartate + phosphate + H(+). Its pathway is pyrimidine metabolism; UMP biosynthesis via de novo pathway; (S)-dihydroorotate from bicarbonate: step 2/3. Functionally, catalyzes the condensation of carbamoyl phosphate and aspartate to form carbamoyl aspartate and inorganic phosphate, the committed step in the de novo pyrimidine nucleotide biosynthesis pathway. In Xylella fastidiosa (strain 9a5c), this protein is Aspartate carbamoyltransferase catalytic subunit.